Reading from the N-terminus, the 89-residue chain is Large ribosomal subunit protein bL27 (89 aa).

Residues 1–21 (MAHKKAGGSSRNGRDSQSKRL) are disordered.

Belongs to the bacterial ribosomal protein bL27 family.

This is Large ribosomal subunit protein bL27 from Rhizobium rhizogenes (strain K84 / ATCC BAA-868) (Agrobacterium radiobacter).